The sequence spans 270 residues: tRNA pseudouridine synthase A (270 aa).

The active-site Nucleophile is D60. The segment at 107 to 111 (FHARF) is RNA binding. Y118 is a binding site for substrate. The interval 168–172 (QCQSR) is interaction with tRNA.

The protein belongs to the tRNA pseudouridine synthase TruA family. In terms of assembly, homodimer.

The catalysed reaction is uridine(38/39/40) in tRNA = pseudouridine(38/39/40) in tRNA. Formation of pseudouridine at positions 38, 39 and 40 in the anticodon stem and loop of transfer RNAs. This is tRNA pseudouridine synthase A from Escherichia coli O139:H28 (strain E24377A / ETEC).